The sequence spans 559 residues: Potassium-transporting ATPase potassium-binding subunit (559 aa).

Helical transmembrane passes span 5 to 25, 27 to 47, 63 to 83, 132 to 152, 170 to 190, 253 to 273, 283 to 303, 327 to 347, 356 to 376, 379 to 399, 416 to 436, 484 to 504, and 524 to 544; these read GFLLIASFLLILLVLAKPLGS, LARLIAAVPLPGVAGVERILW, LLALLTLNLLGLGILFCLLFW, GLTVQNFLSAATGIAVVFALI, LVRITLWILFPVALIIALFFI, LAQMLAIFLIPAALCFAFGEA, LLWAMSFIFVVCVAVVMWAEV, FGVLASSLFAVVTTAASCGAV, ALGGMVPMWLMQIGEVVFGGV, GLYGMLLFVLLAVFIAGLMIG, MTALAILVTPMLVLLGSALAM, LLAFCMFVGRFGVIIPVMAIA, and GALFIGLLIGTVLLVGALTFI.

The protein belongs to the KdpA family. In terms of assembly, the system is composed of three essential subunits: KdpA, KdpB and KdpC.

The protein resides in the cell inner membrane. Its function is as follows. Part of the high-affinity ATP-driven potassium transport (or Kdp) system, which catalyzes the hydrolysis of ATP coupled with the electrogenic transport of potassium into the cytoplasm. This subunit binds the periplasmic potassium ions and delivers the ions to the membrane domain of KdpB through an intramembrane tunnel. This Salmonella dublin (strain CT_02021853) protein is Potassium-transporting ATPase potassium-binding subunit.